A 175-amino-acid polypeptide reads, in one-letter code: Dual-action ribosomal maturation protein DarP (175 aa).

It belongs to the DarP family.

It is found in the cytoplasm. In terms of biological role, member of a network of 50S ribosomal subunit biogenesis factors which assembles along the 30S-50S interface, preventing incorrect 23S rRNA structures from forming. Promotes peptidyl transferase center (PTC) maturation. The protein is Dual-action ribosomal maturation protein DarP of Vibrio parahaemolyticus serotype O3:K6 (strain RIMD 2210633).